The sequence spans 518 residues: 2-isopropylmalate synthase (518 aa).

A Pyruvate carboxyltransferase domain is found at 5–267 (VIIFDTTLRD…STNIKHKEIY (263 aa)). Asp14, His202, His204, and Asn238 together coordinate Mn(2+). Residues 392 to 518 (SLSFFSVQSI…KLKTLKKVNN (127 aa)) are regulatory domain.

The protein belongs to the alpha-IPM synthase/homocitrate synthase family. LeuA type 1 subfamily. In terms of assembly, homodimer. Requires Mn(2+) as cofactor.

It localises to the cytoplasm. It carries out the reaction 3-methyl-2-oxobutanoate + acetyl-CoA + H2O = (2S)-2-isopropylmalate + CoA + H(+). It participates in amino-acid biosynthesis; L-leucine biosynthesis; L-leucine from 3-methyl-2-oxobutanoate: step 1/4. In terms of biological role, catalyzes the condensation of the acetyl group of acetyl-CoA with 3-methyl-2-oxobutanoate (2-ketoisovalerate) to form 3-carboxy-3-hydroxy-4-methylpentanoate (2-isopropylmalate). The sequence is that of 2-isopropylmalate synthase from Buchnera aphidicola subsp. Schizaphis graminum (strain Sg).